The sequence spans 354 residues: Sulfate permease CysP (354 aa).

8 helical membrane passes run 3–23, 40–60, 77–97, 125–145, 164–184, 197–217, 293–313, and 320–340; these read LAAI…GAAA, ALIL…GEVV, IVCI…LLGI, LIIV…TYFV, ILGI…GMNN, VLDV…GALL, VWIV…SLFL, and IFIM…TKAI.

It belongs to the inorganic phosphate transporter (PiT) (TC 2.A.20) family.

The protein resides in the cell membrane. In terms of biological role, involved in the import of sulfate. The protein is Sulfate permease CysP (cysP) of Bacillus subtilis (strain 168).